The following is a 140-amino-acid chain: ATP synthase epsilon chain (140 aa).

The protein belongs to the ATPase epsilon chain family. In terms of assembly, F-type ATPases have 2 components, CF(1) - the catalytic core - and CF(0) - the membrane proton channel. CF(1) has five subunits: alpha(3), beta(3), gamma(1), delta(1), epsilon(1). CF(0) has three main subunits: a, b and c.

Its subcellular location is the cell inner membrane. In terms of biological role, produces ATP from ADP in the presence of a proton gradient across the membrane. This Yersinia pseudotuberculosis serotype O:1b (strain IP 31758) protein is ATP synthase epsilon chain.